We begin with the raw amino-acid sequence, 522 residues long: Transactivator/viroplasmin protein (522 aa).

Positions 487-500 (KDASTDRGTTDKDG) are enriched in basic and acidic residues. The segment at 487-522 (KDASTDRGTTDKDGPPPTRSIVEKEDVPTTSSKQVD) is disordered.

Belongs to the caulimoviridae viroplasmin family.

It is found in the host cytoplasm. Enhances the ribosomal termination-reinitiation event leading to the translation of major open reading frames on the polycistronic viral RNAs. The polypeptide is Transactivator/viroplasmin protein (Arabidopsis thaliana (Mouse-ear cress)).